Reading from the N-terminus, the 171-residue chain is MNRKQKRLAVIAGGMGFIAAAVLLVMFAFSQSVAYFYMPADLAKTPVAPETRIRLGGLVGEGSVVRGAGSTVEFSVTDGSANAVKVKYTGILPDLFREGQGVVTEGMFAPGTNVFTADTVLAKHDETYMPKDVADRLKQQGLWKEGQGGQESPGKEGQGQENPGEEAKATQ.

Residues 1-7 lie on the Cytoplasmic side of the membrane; that stretch reads MNRKQKR. Residues 8 to 28 traverse the membrane as a helical; Signal-anchor for type II membrane protein segment; the sequence is LAVIAGGMGFIAAAVLLVMFA. The Periplasmic portion of the chain corresponds to 29–171; sequence FSQSVAYFYM…NPGEEAKATQ (143 aa). Heme-binding residues include His124 and Tyr128. The tract at residues 132 to 171 is disordered; it reads DVADRLKQQGLWKEGQGGQESPGKEGQGQENPGEEAKATQ.

The protein belongs to the CcmE/CycJ family.

The protein localises to the cell inner membrane. Heme chaperone required for the biogenesis of c-type cytochromes. Transiently binds heme delivered by CcmC and transfers the heme to apo-cytochromes in a process facilitated by CcmF and CcmH. This is Cytochrome c-type biogenesis protein CcmE from Rhizobium leguminosarum bv. trifolii (strain WSM2304).